The sequence spans 291 residues: Acetyl-coenzyme A carboxylase carboxyl transferase subunit beta (291 aa).

A disordered region spans residues 1–23; it reads MSWLSKLMPSGIRTDNTPSKKRS. The 264-residue stretch at 28 to 291 folds into the CoA carboxyltransferase N-terminal domain; the sequence is LWEKCSNCGS…LGRQPAPEVA (264 aa). 4 residues coordinate Zn(2+): cysteine 32, cysteine 35, cysteine 51, and cysteine 54. The C4-type zinc finger occupies 32–54; sequence CSNCGSALYRPELEENLEVCPKC.

This sequence belongs to the AccD/PCCB family. As to quaternary structure, acetyl-CoA carboxylase is a heterohexamer composed of biotin carboxyl carrier protein (AccB), biotin carboxylase (AccC) and two subunits each of ACCase subunit alpha (AccA) and ACCase subunit beta (AccD). It depends on Zn(2+) as a cofactor.

The protein localises to the cytoplasm. The enzyme catalyses N(6)-carboxybiotinyl-L-lysyl-[protein] + acetyl-CoA = N(6)-biotinyl-L-lysyl-[protein] + malonyl-CoA. It functions in the pathway lipid metabolism; malonyl-CoA biosynthesis; malonyl-CoA from acetyl-CoA: step 1/1. In terms of biological role, component of the acetyl coenzyme A carboxylase (ACC) complex. Biotin carboxylase (BC) catalyzes the carboxylation of biotin on its carrier protein (BCCP) and then the CO(2) group is transferred by the transcarboxylase to acetyl-CoA to form malonyl-CoA. The sequence is that of Acetyl-coenzyme A carboxylase carboxyl transferase subunit beta from Stenotrophomonas maltophilia (strain K279a).